We begin with the raw amino-acid sequence, 393 residues long: NAD(P)H-quinone oxidoreductase subunit H, chloroplastic (393 aa).

It belongs to the complex I 49 kDa subunit family. As to quaternary structure, NDH is composed of at least 16 different subunits, 5 of which are encoded in the nucleus.

The protein resides in the plastid. It localises to the chloroplast thylakoid membrane. The enzyme catalyses a plastoquinone + NADH + (n+1) H(+)(in) = a plastoquinol + NAD(+) + n H(+)(out). It catalyses the reaction a plastoquinone + NADPH + (n+1) H(+)(in) = a plastoquinol + NADP(+) + n H(+)(out). Functionally, NDH shuttles electrons from NAD(P)H:plastoquinone, via FMN and iron-sulfur (Fe-S) centers, to quinones in the photosynthetic chain and possibly in a chloroplast respiratory chain. The immediate electron acceptor for the enzyme in this species is believed to be plastoquinone. Couples the redox reaction to proton translocation, and thus conserves the redox energy in a proton gradient. The polypeptide is NAD(P)H-quinone oxidoreductase subunit H, chloroplastic (Lepidium virginicum (Virginia pepperweed)).